The sequence spans 252 residues: Protein lin-28 homolog B (252 aa).

Residues 1 to 30 (MAEGGAARGTREEQGKLPEQEEEEEEDPQV) form a disordered region. The span at 9 to 19 (GTREEQGKLPE) shows a compositional bias: basic and acidic residues. A CSD domain is found at 32-105 (LGSGHCKWFN…GFESLRVTGP (74 aa)). CCHC-type zinc fingers lie at residues 130-147 (DRCYNCGGLDHHAKECNL) and 152-169 (KKCHYCQSTMHMVANCPH). Zn(2+)-binding residues include Cys-132, Cys-135, His-140, Cys-145, Cys-154, Cys-157, His-162, and Cys-167. Residues 172-252 (VPQHPTTSQG…KGPSVQKKKK (81 aa)) form a disordered region. Residues 213-222 (GRSELSERSS) show a composition bias toward basic and acidic residues. Residues 225–238 (PQEASLSKISTSPE) are compositionally biased toward polar residues.

It belongs to the lin-28 family.

It is found in the nucleus. The protein localises to the nucleolus. In terms of biological role, suppressor of specific microRNA (miRNA) biogenesis. Binds target primary miRNA transcripts and sequester them in the nucleolus, away from the microprocessor complex, hence preventing their processing into mature miRNA. The specific interaction with target pri-miRNAs occurs via an 5'-GGAG-3' motif in the pre-miRNA terminal loop. The sequence is that of Protein lin-28 homolog B (lin28b) from Xenopus laevis (African clawed frog).